Reading from the N-terminus, the 724-residue chain is MASAVERTDDLVREYLIYRGFTSTLKHLDSEIKTDKEKGFRVDKIMDQLQLLIQSCDLTGLKEYWANLERRLFCRLEDVYKPTVSKLRTSLYRFYLIHTVQVKNVEKTQEFFQKQALELQAQAEWRDWFSLPFIPAPEQNPSFSAYFSRQWADTFLVSLHNFLSVLFQCMPLPALLSFDSEVQRITSLQEDNEQLRQTVFALQGESRLKKDEQMVHHKLPPYVQHMDRLGDTELDLVSSQRNVNMATPSRNFFSTFLPQGRRAPGRTAPGPQSSPTQSALGRKDAAASMQSSKAKDKEVKPPSVSSMTAELSTSHPRQRRHQDHEKERKELFSKHAAQGSEKKTDSDPDTQTEAPPDQTDSANQTRVCDVGGAGAEQPFIKLSQEEYGEHHSSIMHCRVDCSGRRVASLDVDGVVKVWAFNPIMQTKATIMSKSPLLSLEWAAKPDRLLLLGSGVGTVKLYDTDAKKCLYEMTIDDVHPRILSLACSPSGTSFVCSAAAHSGAVMESEPRGSAPVSGQLLLWDTKTVKQQLQFALEPGPVAINCTAFNHNGNLLVTGAADGIIRLFDMQRYESALSWKAHDGEVYSVEFSYDENTVFSIGEDGKFVQWNIHRCGVKQSEYSLSQDAVGPFVLSGYSGYKQVQVPRGRLFAFDSEGQHVLTCSSTGGNIYRLNKAEAGLESVLSLAGHKAPVVTVDWCSAMDCGTCLTASMDGKIKLSTLLAQKP.

The stretch at 178–207 (FDSEVQRITSLQEDNEQLRQTVFALQGESR) forms a coiled coil. The disordered stretch occupies residues 249–365 (SRNFFSTFLP…PDQTDSANQT (117 aa)). Polar residues-rich tracts occupy residues 270–279 (GPQSSPTQSA) and 303–315 (SVSS…STSH). Phosphoserine is present on S274. The segment covering 322–333 (QDHEKERKELFS) has biased composition (basic and acidic residues). Residues 349-365 (DTQTEAPPDQTDSANQT) are compositionally biased toward polar residues. WD repeat units lie at residues 389–428 (EHHS…QTKA), 431–471 (MSKS…CLYE), 499–532 (AHSG…QQLQ), 537–576 (PGPV…SALS), 579–618 (AHDG…VKQS), 641–679 (VQVP…AGLE), and 686–724 (GHKA…AQKP).

This sequence belongs to the WD repeat WDR91 family.

It localises to the early endosome membrane. Its subcellular location is the late endosome membrane. Functionally, functions as a negative regulator of the PI3 kinase/PI3K activity associated with endosomal membranes. By modifying the phosphatidylinositol 3-phosphate/PtdInsP3 content of endosomal membranes may regulate endosome fusion, recycling, sorting and early to late endosome transport. This chain is WD repeat-containing protein 91 (wdr91), found in Danio rerio (Zebrafish).